We begin with the raw amino-acid sequence, 187 residues long: Elongation factor P (187 aa).

It belongs to the elongation factor P family.

It is found in the cytoplasm. The protein operates within protein biosynthesis; polypeptide chain elongation. In terms of biological role, involved in peptide bond synthesis. Stimulates efficient translation and peptide-bond synthesis on native or reconstituted 70S ribosomes in vitro. Probably functions indirectly by altering the affinity of the ribosome for aminoacyl-tRNA, thus increasing their reactivity as acceptors for peptidyl transferase. The protein is Elongation factor P of Nocardioides sp. (strain ATCC BAA-499 / JS614).